The sequence spans 136 residues: Protein PsiE (136 aa).

4 helical membrane passes run 15 to 35 (ILQT…VVFL), 55 to 75 (YELV…ALIV), 82 to 102 (FHFP…RLII), and 108 to 128 (PLDV…LWLC).

The protein belongs to the PsiE family.

It localises to the cell inner membrane. The sequence is that of Protein PsiE from Escherichia coli (strain SE11).